A 433-amino-acid chain; its full sequence is Cell division control protein KAR1 (433 aa).

Disordered stretches follow at residues M1 to L38, T69 to G101, and K207 to R227. T233 is subject to Phosphothreonine.

As to quaternary structure, interacts with SPC72.

It is found in the cytoplasm. The protein resides in the cytoskeleton. The protein localises to the microtubule organizing center. It localises to the spindle pole body. In terms of biological role, KAR1 is required for function of both intranuclear and extranuclear microtubules. KAR1 helps localize CDC31 to the spindle pole body (SPB), CDC31 then initiates SPB duplication via interaction with a downstream effector. The protein is Cell division control protein KAR1 (KAR1) of Saccharomyces cerevisiae (strain ATCC 204508 / S288c) (Baker's yeast).